A 1034-amino-acid polypeptide reads, in one-letter code: Error-prone DNA polymerase (1034 aa).

The protein belongs to the DNA polymerase type-C family. DnaE2 subfamily.

The protein localises to the cytoplasm. The enzyme catalyses DNA(n) + a 2'-deoxyribonucleoside 5'-triphosphate = DNA(n+1) + diphosphate. Its function is as follows. DNA polymerase involved in damage-induced mutagenesis and translesion synthesis (TLS). It is not the major replicative DNA polymerase. The sequence is that of Error-prone DNA polymerase from Pseudomonas fluorescens (strain ATCC BAA-477 / NRRL B-23932 / Pf-5).